A 433-amino-acid chain; its full sequence is Glutamate-1-semialdehyde 2,1-aminomutase (433 aa).

K271 is subject to N6-(pyridoxal phosphate)lysine.

Belongs to the class-III pyridoxal-phosphate-dependent aminotransferase family. HemL subfamily. As to quaternary structure, homodimer. It depends on pyridoxal 5'-phosphate as a cofactor.

The protein localises to the cytoplasm. The catalysed reaction is (S)-4-amino-5-oxopentanoate = 5-aminolevulinate. It functions in the pathway porphyrin-containing compound metabolism; protoporphyrin-IX biosynthesis; 5-aminolevulinate from L-glutamyl-tRNA(Glu): step 2/2. Its pathway is porphyrin-containing compound metabolism; chlorophyll biosynthesis. In Prochlorococcus marinus (strain SARG / CCMP1375 / SS120), this protein is Glutamate-1-semialdehyde 2,1-aminomutase.